We begin with the raw amino-acid sequence, 159 residues long: NAD(P)H-quinone oxidoreductase subunit J, chloroplastic (159 aa).

Belongs to the complex I 30 kDa subunit family. As to quaternary structure, NDH is composed of at least 16 different subunits, 5 of which are encoded in the nucleus.

It localises to the plastid. Its subcellular location is the chloroplast thylakoid membrane. The enzyme catalyses a plastoquinone + NADH + (n+1) H(+)(in) = a plastoquinol + NAD(+) + n H(+)(out). The catalysed reaction is a plastoquinone + NADPH + (n+1) H(+)(in) = a plastoquinol + NADP(+) + n H(+)(out). In terms of biological role, NDH shuttles electrons from NAD(P)H:plastoquinone, via FMN and iron-sulfur (Fe-S) centers, to quinones in the photosynthetic chain and possibly in a chloroplast respiratory chain. The immediate electron acceptor for the enzyme in this species is believed to be plastoquinone. Couples the redox reaction to proton translocation, and thus conserves the redox energy in a proton gradient. The polypeptide is NAD(P)H-quinone oxidoreductase subunit J, chloroplastic (Brachypodium distachyon (Purple false brome)).